Reading from the N-terminus, the 400-residue chain is CCA-adding enzyme (400 aa).

Residues Gly-28 and Arg-31 each contribute to the ATP site. Residues Gly-28 and Arg-31 each contribute to the CTP site. The Mg(2+) site is built by Asp-41 and Asp-43. Residues Arg-112, Asp-155, Arg-158, Arg-161, and Arg-164 each contribute to the ATP site. 5 residues coordinate CTP: Arg-112, Asp-155, Arg-158, Arg-161, and Arg-164.

It belongs to the tRNA nucleotidyltransferase/poly(A) polymerase family. Bacterial CCA-adding enzyme type 3 subfamily. As to quaternary structure, homodimer. The cofactor is Mg(2+).

The catalysed reaction is a tRNA precursor + 2 CTP + ATP = a tRNA with a 3' CCA end + 3 diphosphate. It catalyses the reaction a tRNA with a 3' CCA end + 2 CTP + ATP = a tRNA with a 3' CCACCA end + 3 diphosphate. Functionally, catalyzes the addition and repair of the essential 3'-terminal CCA sequence in tRNAs without using a nucleic acid template. Adds these three nucleotides in the order of C, C, and A to the tRNA nucleotide-73, using CTP and ATP as substrates and producing inorganic pyrophosphate. tRNA 3'-terminal CCA addition is required both for tRNA processing and repair. Also involved in tRNA surveillance by mediating tandem CCA addition to generate a CCACCA at the 3' terminus of unstable tRNAs. While stable tRNAs receive only 3'-terminal CCA, unstable tRNAs are marked with CCACCA and rapidly degraded. The polypeptide is CCA-adding enzyme (Oceanobacillus iheyensis (strain DSM 14371 / CIP 107618 / JCM 11309 / KCTC 3954 / HTE831)).